The following is a 381-amino-acid chain: Dual-specificity RNA methyltransferase RlmN (381 aa).

Glu86 (proton acceptor) is an active-site residue. The region spanning 105–338 is the Radical SAM core domain; the sequence is RHARYTICVS…CTIRQSKGLD (234 aa). Cysteines 112 and 343 form a disulfide. Positions 119, 123, and 126 each coordinate [4Fe-4S] cluster. S-adenosyl-L-methionine is bound by residues 169 to 170, Ser201, 224 to 226, and Asn300; these read GE and SLH. The active-site S-methylcysteine intermediate is Cys343. The interval 351-381 is disordered; it reads ENPKFRANVSGNSAAKTEEKPTNDKTNVSKK.

The protein belongs to the radical SAM superfamily. RlmN family. It depends on [4Fe-4S] cluster as a cofactor.

Its subcellular location is the cytoplasm. The catalysed reaction is adenosine(2503) in 23S rRNA + 2 reduced [2Fe-2S]-[ferredoxin] + 2 S-adenosyl-L-methionine = 2-methyladenosine(2503) in 23S rRNA + 5'-deoxyadenosine + L-methionine + 2 oxidized [2Fe-2S]-[ferredoxin] + S-adenosyl-L-homocysteine. The enzyme catalyses adenosine(37) in tRNA + 2 reduced [2Fe-2S]-[ferredoxin] + 2 S-adenosyl-L-methionine = 2-methyladenosine(37) in tRNA + 5'-deoxyadenosine + L-methionine + 2 oxidized [2Fe-2S]-[ferredoxin] + S-adenosyl-L-homocysteine. Functionally, specifically methylates position 2 of adenine 2503 in 23S rRNA and position 2 of adenine 37 in tRNAs. m2A2503 modification seems to play a crucial role in the proofreading step occurring at the peptidyl transferase center and thus would serve to optimize ribosomal fidelity. The chain is Dual-specificity RNA methyltransferase RlmN from Campylobacter concisus (strain 13826).